Here is a 224-residue protein sequence, read N- to C-terminus: Ribonuclease T (224 aa).

Residues 32–206 form the Exonuclease domain; it reads VVVDVETGGF…YDTEKTAELF (175 aa). Mg(2+) contacts are provided by aspartate 35, glutamate 37, histidine 193, and aspartate 198. Histidine 193 acts as the Proton donor/acceptor in catalysis.

The protein belongs to the RNase T family. In terms of assembly, homodimer. Requires Mg(2+) as cofactor.

Its function is as follows. Trims short 3' overhangs of a variety of RNA species, leaving a one or two nucleotide 3' overhang. Responsible for the end-turnover of tRNA: specifically removes the terminal AMP residue from uncharged tRNA (tRNA-C-C-A). Also appears to be involved in tRNA biosynthesis. The protein is Ribonuclease T of Pseudomonas aeruginosa (strain UCBPP-PA14).